The following is a 149-amino-acid chain: MKVLIVLLLGLAFVLADHHHHHHDYVVKTHEDLTNYRTQCVEKVHASEELVEKYKKWQYPDDAVTHCYLECIFQKFGFYDTEHGFDVHKIHIQLAGPGVEVHESDEVHQKIAHCAETHSKEGDSCSKAYHAGMCFMNSNLQLVQHSVKV.

The N-terminal stretch at 1–16 (MKVLIVLLLGLAFVLA) is a signal peptide. 3 disulfide bridges follow: Cys40–Cys71, Cys67–Cys125, and Cys114–Cys134.

It belongs to the PBP/GOBP family. As to expression, expressed in adult olfactory system. Expressed in subsets of sensilla in both olfactory organs, the maxillary palps, and third antennal segments.

The protein localises to the secreted. In terms of biological role, present in the aqueous fluid surrounding olfactory sensory dendrites and are thought to aid in the capture and transport of hydrophobic odorants into and through this fluid. The chain is General odorant-binding protein 99b (Obp99b) from Drosophila melanogaster (Fruit fly).